The chain runs to 330 residues: Delta-aminolevulinic acid dehydratase (330 aa).

K203 serves as the catalytic Schiff-base intermediate with substrate. Residues R213 and R224 each coordinate 5-aminolevulinate. A Mg(2+)-binding site is contributed by E240. Catalysis depends on K255, which acts as the Schiff-base intermediate with substrate. 5-aminolevulinate-binding residues include S281 and Y320.

Belongs to the ALAD family. In terms of assembly, homooctamer.

The enzyme catalyses 2 5-aminolevulinate = porphobilinogen + 2 H2O + H(+). The protein operates within porphyrin-containing compound metabolism; protoporphyrin-IX biosynthesis; coproporphyrinogen-III from 5-aminolevulinate: step 1/4. Functionally, catalyzes an early step in the biosynthesis of tetrapyrroles. Binds two molecules of 5-aminolevulinate per subunit, each at a distinct site, and catalyzes their condensation to form porphobilinogen. In Streptomyces coelicolor (strain ATCC BAA-471 / A3(2) / M145), this protein is Delta-aminolevulinic acid dehydratase (hemB).